The sequence spans 22 residues: Conantokin-Oc (22 aa).

The disordered stretch occupies residues 1–22 (GEEERKAMAELEAKKAQEALKA). Residues Glu-3, Glu-4, Glu-10, and Glu-18 each carry the 4-carboxyglutamate modification.

As to expression, expressed by the venom duct.

It localises to the secreted. Conantokins inhibit N-methyl-D-aspartate (NMDA) receptors. This Conus ochroleucus (Perfect cone) protein is Conantokin-Oc.